We begin with the raw amino-acid sequence, 62 residues long: MENIKTTTEQLRTEANIQRKKVSEVAKDLVEFCEKNKATDMLVSGPLDAHNPFQEKKSCSVL.

C59 carries the post-translational modification Cysteine methyl ester. A lipid anchor (S-geranylgeranyl cysteine) is attached at C59. The propeptide at 60-62 (SVL) is removed in mature form.

The protein belongs to the G protein gamma family. In terms of assembly, g proteins are composed of 3 units, alpha, beta and gamma. Interacts with gpb-1 and gpb-2.

It localises to the cell membrane. In terms of biological role, guanine nucleotide-binding proteins (G proteins) are involved as a modulator or transducer in various transmembrane signaling systems. The beta and gamma chains are required for the GTPase activity, for replacement of GDP by GTP, and for G protein-effector interaction. The polypeptide is Guanine nucleotide-binding protein subunit gamma (gpc-1) (Caenorhabditis briggsae).